The chain runs to 204 residues: MQTFIHGGGRLPEAVDAALAHYRHQIFVGQLGWQLPMADGRFERDQYDRDDTVYVVARDADGAICGCARLLPTTRPYLLKDVFAPLLMRGVPAPESPGVWELSRFAARSGASRARGARPDWAVRPMLASVVQCAAQRGARRLIGVTFVSMVRLFRRIGVRAHHAGPVRCIGGRPVVACWIDIDASTCAALGIPGASVVPGPALQ.

This sequence belongs to the autoinducer synthase family.

It catalyses the reaction a fatty acyl-[ACP] + S-adenosyl-L-methionine = an N-acyl-L-homoserine lactone + S-methyl-5'-thioadenosine + holo-[ACP] + H(+). Functionally, required for the synthesis of acyl-HSL autoinducers that bind to SolR. This Ralstonia nicotianae (strain ATCC BAA-1114 / GMI1000) (Ralstonia solanacearum) protein is Acyl-homoserine-lactone synthase (solI).